The chain runs to 283 residues: Protein FdhE homolog (283 aa).

This sequence belongs to the FdhE family.

It localises to the cytoplasm. Necessary for formate dehydrogenase activity. The protein is Protein FdhE homolog of Aquifex aeolicus (strain VF5).